A 122-amino-acid chain; its full sequence is Large ribosomal subunit protein uL14 (122 aa).

This sequence belongs to the universal ribosomal protein uL14 family. Part of the 50S ribosomal subunit. Forms a cluster with proteins L3 and L19. In the 70S ribosome, L14 and L19 interact and together make contacts with the 16S rRNA in bridges B5 and B8.

Its function is as follows. Binds to 23S rRNA. Forms part of two intersubunit bridges in the 70S ribosome. This Roseiflexus castenholzii (strain DSM 13941 / HLO8) protein is Large ribosomal subunit protein uL14.